Reading from the N-terminus, the 343-residue chain is Anthranilate phosphoribosyltransferase (343 aa).

Residues glycine 84, 87–88 (GD), threonine 92, 94–97 (NIST), 112–120 (KHGNRGVSS), and serine 124 contribute to the 5-phospho-alpha-D-ribose 1-diphosphate site. Glycine 84 is an anthranilate binding site. Position 96 (serine 96) interacts with Mg(2+). Position 115 (asparagine 115) interacts with anthranilate. An anthranilate-binding site is contributed by arginine 170. 2 residues coordinate Mg(2+): aspartate 229 and glutamate 230.

It belongs to the anthranilate phosphoribosyltransferase family. In terms of assembly, homodimer. It depends on Mg(2+) as a cofactor.

The catalysed reaction is N-(5-phospho-beta-D-ribosyl)anthranilate + diphosphate = 5-phospho-alpha-D-ribose 1-diphosphate + anthranilate. It functions in the pathway amino-acid biosynthesis; L-tryptophan biosynthesis; L-tryptophan from chorismate: step 2/5. Catalyzes the transfer of the phosphoribosyl group of 5-phosphorylribose-1-pyrophosphate (PRPP) to anthranilate to yield N-(5'-phosphoribosyl)-anthranilate (PRA). This chain is Anthranilate phosphoribosyltransferase, found in Burkholderia ambifaria (strain MC40-6).